The chain runs to 144 residues: Large ribosomal subunit protein uL15 (144 aa).

Positions 1–59 (MRLNTISPAEGSKPTGKRSGRGIGSGLGKTGGVGHKGQKSRSGGRVKPGFEGGQMPIQR) are disordered. The span at 21–35 (RGIGSGLGKTGGVGH) shows a compositional bias: gly residues.

This sequence belongs to the universal ribosomal protein uL15 family. As to quaternary structure, part of the 50S ribosomal subunit.

Functionally, binds to the 23S rRNA. The chain is Large ribosomal subunit protein uL15 from Alteromonas mediterranea (strain DSM 17117 / CIP 110805 / LMG 28347 / Deep ecotype).